The chain runs to 160 residues: SsrA-binding protein (160 aa).

Positions 131-160 are disordered; sequence KKEYDKRHTERERDSDRELQRAVRTKGKDD.

The protein belongs to the SmpB family.

The protein resides in the cytoplasm. Functionally, required for rescue of stalled ribosomes mediated by trans-translation. Binds to transfer-messenger RNA (tmRNA), required for stable association of tmRNA with ribosomes. tmRNA and SmpB together mimic tRNA shape, replacing the anticodon stem-loop with SmpB. tmRNA is encoded by the ssrA gene; the 2 termini fold to resemble tRNA(Ala) and it encodes a 'tag peptide', a short internal open reading frame. During trans-translation Ala-aminoacylated tmRNA acts like a tRNA, entering the A-site of stalled ribosomes, displacing the stalled mRNA. The ribosome then switches to translate the ORF on the tmRNA; the nascent peptide is terminated with the 'tag peptide' encoded by the tmRNA and targeted for degradation. The ribosome is freed to recommence translation, which seems to be the essential function of trans-translation. This Pseudomonas syringae pv. tomato (strain ATCC BAA-871 / DC3000) protein is SsrA-binding protein.